The following is a 370-amino-acid chain: UDP-3-O-acylglucosamine N-acyltransferase (370 aa).

The active-site Proton acceptor is His-252. The segment at 350-370 (AAGRQDGPAANAASSSAGDKA) is disordered. A compositionally biased stretch (low complexity) spans 358–370 (AANAASSSAGDKA).

This sequence belongs to the transferase hexapeptide repeat family. LpxD subfamily. Homotrimer.

It carries out the reaction a UDP-3-O-[(3R)-3-hydroxyacyl]-alpha-D-glucosamine + a (3R)-hydroxyacyl-[ACP] = a UDP-2-N,3-O-bis[(3R)-3-hydroxyacyl]-alpha-D-glucosamine + holo-[ACP] + H(+). It participates in bacterial outer membrane biogenesis; LPS lipid A biosynthesis. Catalyzes the N-acylation of UDP-3-O-acylglucosamine using 3-hydroxyacyl-ACP as the acyl donor. Is involved in the biosynthesis of lipid A, a phosphorylated glycolipid that anchors the lipopolysaccharide to the outer membrane of the cell. The sequence is that of UDP-3-O-acylglucosamine N-acyltransferase from Paraburkholderia xenovorans (strain LB400).